Reading from the N-terminus, the 122-residue chain is Small ribosomal subunit protein uS13 (122 aa).

Residues 96–122 (PVRGQRTRTNARTRKGPKKTVGVRRAK) are disordered.

It belongs to the universal ribosomal protein uS13 family. As to quaternary structure, part of the 30S ribosomal subunit. Forms a loose heterodimer with protein S19. Forms two bridges to the 50S subunit in the 70S ribosome.

Its function is as follows. Located at the top of the head of the 30S subunit, it contacts several helices of the 16S rRNA. In the 70S ribosome it contacts the 23S rRNA (bridge B1a) and protein L5 of the 50S subunit (bridge B1b), connecting the 2 subunits; these bridges are implicated in subunit movement. Contacts the tRNAs in the A and P-sites. In Halothermothrix orenii (strain H 168 / OCM 544 / DSM 9562), this protein is Small ribosomal subunit protein uS13.